A 199-amino-acid polypeptide reads, in one-letter code: Large ribosomal subunit protein bL25 (199 aa).

This sequence belongs to the bacterial ribosomal protein bL25 family. CTC subfamily. As to quaternary structure, part of the 50S ribosomal subunit; part of the 5S rRNA/L5/L18/L25 subcomplex. Contacts the 5S rRNA. Binds to the 5S rRNA independently of L5 and L18.

Functionally, this is one of the proteins that binds to the 5S RNA in the ribosome where it forms part of the central protuberance. The protein is Large ribosomal subunit protein bL25 of Herpetosiphon aurantiacus (strain ATCC 23779 / DSM 785 / 114-95).